The primary structure comprises 1679 residues: Furin-like protease 2 (1679 aa).

The span at Met-1–Val-10 shows a compositional bias: polar residues. The segment at Met-1–Ser-42 is disordered. N-linked (GlcNAc...) asparagine glycosylation is found at Asn-3, Asn-109, and Asn-130. The segment at Val-139–Asp-164 is disordered. Over residues Arg-147 to Asn-160 the composition is skewed to low complexity. N-linked (GlcNAc...) asparagine glycosylation occurs at Asn-205. The Peptidase S8 domain occupies Gln-383–Val-705. Catalysis depends on Asp-417, which acts as the Charge relay system. The segment at His-424–His-456 is disordered. Polar residues predominate over residues Ile-439–Asn-451. Asn-442 carries an N-linked (GlcNAc...) asparagine glycan. The Charge relay system role is filled by His-456. Cystine bridges form between Cys-473/Cys-629 and Cys-565/Cys-595. Residue Asn-480 is glycosylated (N-linked (GlcNAc...) asparagine). Catalysis depends on Ser-637, which acts as the Charge relay system. The region spanning Val-714–Gln-852 is the P/Homo B domain. An intrachain disulfide couples Cys-720 to Cys-748. N-linked (GlcNAc...) asparagine glycosylation is present at Asn-927. FU repeat units follow at residues Lys-961–Pro-1006, Val-1009–Glu-1056, Asn-1060–Glu-1104, Asp-1107–Ala-1152, Arg-1156–Tyr-1204, Glu-1208–Val-1253, Gly-1256–Ser-1299, Arg-1301–Lys-1346, Asp-1348–Asp-1393, and Ser-1396–Ala-1443. A glycan (N-linked (GlcNAc...) asparagine) is linked at Asn-1060. An N-linked (GlcNAc...) asparagine glycan is attached at Asn-1181. N-linked (GlcNAc...) asparagine glycans are attached at residues Asn-1274 and Asn-1277. N-linked (GlcNAc...) asparagine glycosylation is present at Asn-1439. Residues Ala-1512–Leu-1532 traverse the membrane as a helical segment. Topologically, residues Gln-1533 to Ser-1679 are cytoplasmic. A disordered region spans residues Thr-1660–Ser-1679. Positions Pro-1668–Ser-1679 are enriched in polar residues.

It belongs to the peptidase S8 family. Furin subfamily. Ca(2+) serves as cofactor. Transient expression in a subset of central nervous system neurons during embryonic stages 12-13. Expression in developing tracheal tree from stage 13 to end of embryonic development.

It localises to the membrane. It carries out the reaction Release of mature proteins from their proproteins by cleavage of -Arg-Xaa-Yaa-Arg-|-Zaa- bonds, where Xaa can be any amino acid and Yaa is Arg or Lys. Releases albumin, complement component C3 and von Willebrand factor from their respective precursors.. Its function is as follows. Furin is likely to represent the ubiquitous endoprotease activity within constitutive secretory pathways and capable of cleavage at the RX(K/R)R consensus motif. This is Furin-like protease 2 (Fur2) from Drosophila melanogaster (Fruit fly).